The sequence spans 345 residues: Centromere protein U (345 aa).

Composition is skewed to basic residues over residues 1–10 and 19–29; these read MSSKKRTKRN and HKGRSHPRRKF. Disordered stretches follow at residues 1-37 and 64-153; these read MSSK…EPDV and AVDA…SSVQ. Positions 88–106 are enriched in basic and acidic residues; that stretch reads NAERSEKMLLETPEGDVHE. The span at 142–152 shows a compositional bias: low complexity; sequence SDSSVNSPSSV. The stretch at 201–294 forms a coiled coil; sequence CSAFEDQVTD…QDYLDYREEN (94 aa). Positions 222 to 239 match the Nuclear localization signal motif; it reads KKKNAKVVADIKKKRQRL.

This sequence belongs to the CENP-U/AME1 family. Interacts with CENPH-CENPI complex at the kinetochore.

The protein resides in the nucleus. It is found in the chromosome. Its subcellular location is the centromere. Probable component of a centromeric complex involved in assembly of kinetochore proteins, mitotic progression and chromosome segregation. Required for maintenance of sister chromatid adhesion during mitotic checkpoint activation. This is Centromere protein U (CENPU) from Gallus gallus (Chicken).